A 560-amino-acid chain; its full sequence is Dimethylaniline monooxygenase [N-oxide-forming] 4 (560 aa).

FAD is bound by residues Gly-9–Ser-13, Glu-32, and Leu-40–Trp-41. Residues Thr-60–Asn-61 and Thr-195–Asp-198 each bind NADP(+). The helical transmembrane segment at Leu-510 to Tyr-530 threads the bilayer.

This sequence belongs to the FMO family. FAD is required as a cofactor.

Its subcellular location is the microsome membrane. The protein resides in the endoplasmic reticulum membrane. The catalysed reaction is N,N-dimethylaniline + NADPH + O2 + H(+) = N,N-dimethylaniline N-oxide + NADP(+) + H2O. This protein is involved in the oxidative metabolism of a variety of xenobiotics such as drugs and pesticides. This chain is Dimethylaniline monooxygenase [N-oxide-forming] 4 (Fmo4), found in Mus musculus (Mouse).